A 446-amino-acid chain; its full sequence is Nuclear distribution protein PAC1-1 (446 aa).

The LisH domain maps to 9 to 41; the sequence is QAEELHKSLIAYLSSINASQSVTTLREELQIGD. The stretch at 60 to 86 forms a coiled coil; sequence ISVVRLQKRILDLESKIASLQAELDSA. 8 WD repeats span residues 112 to 153, 155 to 195, 199 to 239, 242 to 281, 284 to 344, 346 to 385, 390 to 430, and 432 to 446; these read SHRG…RTLK, HTRT…ANIR, GHDH…CVKT, TQGD…ARAS, GHEN…IKTL, GHNN…KLVK, AHEH…TGFR, and VIAT…RVFM.

It belongs to the WD repeat LIS1/nudF family. As to quaternary structure, self-associates. Interacts with NDL1 and dynein.

The protein resides in the cytoplasm. It localises to the cytoskeleton. Its subcellular location is the spindle pole. Its function is as follows. Positively regulates the activity of the minus-end directed microtubule motor protein dynein. May enhance dynein-mediated microtubule sliding by targeting dynein to the microtubule plus end. Required for nuclear migration during vegetative growth as well as development. Required for retrograde early endosome (EE) transport from the hyphal tip. Required for localization of dynein to the mitotic spindle poles. Recruits additional proteins to the dynein complex at SPBs. The polypeptide is Nuclear distribution protein PAC1-1 (Uncinocarpus reesii (strain UAMH 1704)).